Reading from the N-terminus, the 426-residue chain is 3-phosphoshikimate 1-carboxyvinyltransferase (426 aa).

3 residues coordinate 3-phosphoshikimate: Lys22, Ser23, and Arg27. Position 22 (Lys22) interacts with phosphoenolpyruvate. Positions 96 and 124 each coordinate phosphoenolpyruvate. Positions 170, 171, 172, 198, 314, 337, and 341 each coordinate 3-phosphoshikimate. Gln172 contributes to the phosphoenolpyruvate binding site. Asp314 (proton acceptor) is an active-site residue. 3 residues coordinate phosphoenolpyruvate: Arg345, Arg387, and Lys412.

This sequence belongs to the EPSP synthase family. Monomer.

It localises to the cytoplasm. The catalysed reaction is 3-phosphoshikimate + phosphoenolpyruvate = 5-O-(1-carboxyvinyl)-3-phosphoshikimate + phosphate. Its pathway is metabolic intermediate biosynthesis; chorismate biosynthesis; chorismate from D-erythrose 4-phosphate and phosphoenolpyruvate: step 6/7. Its function is as follows. Catalyzes the transfer of the enolpyruvyl moiety of phosphoenolpyruvate (PEP) to the 5-hydroxyl of shikimate-3-phosphate (S3P) to produce enolpyruvyl shikimate-3-phosphate and inorganic phosphate. The chain is 3-phosphoshikimate 1-carboxyvinyltransferase from Aliivibrio fischeri (strain MJ11) (Vibrio fischeri).